We begin with the raw amino-acid sequence, 356 residues long: RuBisCO accumulation factor 1 (356 aa).

Residues Leu-9–Asp-192 are N-terminal alpha-helix. Positions Pro-216 to Val-342 are C-terminal beta-sheet.

Belongs to the RAF family. In terms of assembly, homodimer. Forms an RbcL(8)-Raf1(8) complex. Forms complexes of many stoichiometries with RbcL with and without RbcS. RbcX and Raf1 can bind simultaneously to RbcL.

It is found in the cytoplasm. A major RuBisCO chaperone. Acts after GroEL-GroES chaperonin to fold and/or assemble the large subunit of RuBisCO (ccbL, rbcL). Cooperates with RbcX in RbcL folding, plays the major role in assembly of dimers into RbcL(8)-Raf1(8) intermediate complexes. RbcS replaces Raf1, leading to holoenzyme formation. Its function is as follows. The Raf1 dimer brackets an RbcL dimer, leading to RbcL(8)-Raf1(8) complex formation. RbcS displaces Raf1, resulting in holoenzyme formation. Probably plays a role in early carboxysome assembly; in its absence CcaA, CcmM, CcmN, RbcL and RbcS colocalize in small patches while the shell proteins CcmK2, CcmK3 and CcmK4 are found diffused in the cytoplasm. In terms of biological role, it has been suggested that Raf1 and RbcX are partially functionally redundant. Other evidence suggests they are antagonistic in mediating RuBisCO assembly. This is RuBisCO accumulation factor 1 from Synechococcus elongatus (strain ATCC 33912 / PCC 7942 / FACHB-805) (Anacystis nidulans R2).